Consider the following 197-residue polypeptide: RNA-binding protein Rsf1 (197 aa).

Residues threonine 7 to glycine 80 form the RRM domain. The interval arginine 74–phenylalanine 197 is disordered. Basic and acidic residues predominate over residues glycine 89–arginine 102. Threonine 106 bears the Phosphothreonine mark. Composition is skewed to low complexity over residues glutamine 117–glycine 144 and arginine 166–glycine 176. Phosphoserine is present on residues serine 168, serine 171, serine 174, serine 188, and serine 190.

It belongs to the splicing factor SR family. Post-translationally, extensively phosphorylated on serine residues in the RS domain.

Its subcellular location is the nucleus. May control important aspects of development. In Drosophila melanogaster (Fruit fly), this protein is RNA-binding protein Rsf1 (Rsf1).